We begin with the raw amino-acid sequence, 351 residues long: 3-hydroxy-4-methyl-anthranilyl-[aryl-carrier protein] 5-monooxygenase (351 aa).

It belongs to the aromatic-ring hydroxylase family. The cofactor is FAD.

It carries out the reaction 3-hydroxy-4-methylanthranilyl-[aryl-carrier protein] + NADH + O2 + H(+) = 3,5-dihydroxy-4-methylanthranilyl-[aryl-carrier protein] + NAD(+) + H2O. It participates in antibiotic biosynthesis. Involved in the biosynthesis of the antitumor antibiotic sibiromycin. Hydroxylates the C5 position of the peptidyl carrier protein (PCP)-bound 4-methyl-3-hydroxyanthranilic acid (4-MHA or 3H4MAA), leading to the formation of the fully substituted anthranilate moiety found in sibiromycin. This Streptosporangium sibiricum protein is 3-hydroxy-4-methyl-anthranilyl-[aryl-carrier protein] 5-monooxygenase.